The primary structure comprises 705 residues: Dolichyl-diphosphooligosaccharide--protein glycosyltransferase subunit STT3A (705 aa).

Residues 1–17 (MTKFGFLRLSYEKQDTL) are Cytoplasmic-facing. The chain crosses the membrane as a helical span at residues 18-38 (LKLLILSMAAVLSFSTRLFAV). Residues 39-119 (LRFESVIHEF…IDIRNVCVFL (81 aa)) lie on the Lumenal side of the membrane. The DXD motif 1 motif lies at 47-49 (EFD). Asp49 provides a ligand contact to Mn(2+). Residues 120–138 (APLFSSFTTIVTYHLTKEL) form a helical membrane-spanning segment. The Cytoplasmic portion of the chain corresponds to 139–140 (KD). The chain crosses the membrane as a helical span at residues 141 to 158 (AGAGLLAAAMIAVVPGYI). Residues 159-169 (SRSVAGSYDNE) are Lumenal-facing. 2 residues coordinate Mn(2+): Asp167 and Glu169. A DXD motif 2 motif is present at residues 167-169 (DNE). The helical transmembrane segment at 170-189 (GIAIFCMLLTYYMWIKAVKT) threads the bilayer. Topologically, residues 190–191 (GS) are cytoplasmic. Residues 192–206 (ICWAAKCALAYFYMV) form a helical membrane-spanning segment. Topologically, residues 207–211 (SSWGG) are lumenal. Residues 212–228 (YVFLINLIPLHVLVLML) traverse the membrane as a helical segment. The Cytoplasmic portion of the chain corresponds to 229 to 233 (TGRFS). A helical transmembrane segment spans residues 234–259 (HRIYVAYCTVYCLGTILSMQISFVGF). Over 260-267 (QPVLSSEH) the chain is Lumenal. Residues 268-287 (MAAFGVFGLCQIHAFVDYLR) form a helical membrane-spanning segment. Topologically, residues 288–300 (SKLNPQQFEVLFR) are cytoplasmic. Residues 301 to 321 (SVISLVGFVLLTVGALLMLTG) form a helical membrane-spanning segment. The Lumenal segment spans residues 322–356 (KISPWTGRFYSLLDPSYAKNNIPIIASVSEHQPTT). The SVSE motif motif lies at 348 to 351 (SVSE). Residues 357–379 (WSSYYFDLQLLVFMFPVGLYYCF) form a helical membrane-spanning segment. At 380-385 (SNLSDA) the chain is on the cytoplasmic side. A helical membrane pass occupies residues 386–402 (RIFIIMYGVTSMYFSAV). At 403–406 (MVRL) the chain is on the lumenal side. Residue Arg405 participates in dolichyl diphosphooligosaccharide binding. The helical transmembrane segment at 407–428 (MLVLAPVMCILSGIGVSQVLST) threads the bilayer. The Cytoplasmic segment spans residues 429 to 453 (YMKNLDISRPDKKSKKQQDSTYPIK). The helical transmembrane segment at 454–473 (NEVASGMILVMAFFLITYTF) threads the bilayer. Residues 474–705 (HSTWVTSEAY…DLDNRGLSRT (232 aa)) are Lumenal-facing. The segment at 525 to 527 (WWD) is interacts with target acceptor peptide in protein substrate. The short motif at 525 to 529 (WWDYG) is the WWDYG motif element. Residue Tyr530 participates in dolichyl diphosphooligosaccharide binding. N-linked (GlcNAc...) asparagine glycosylation is found at Asn537 and Asn544. Asn548 carries an N-linked (GlcNAc...) (high mannose) asparagine glycan. Positions 592-599 (DINKFLWM) match the DK motif motif.

Belongs to the STT3 family. Component of the oligosaccharyltransferase (OST) complex. There are 2 OST complexes, OST-A and OST-B, which contain STT3A or STT3B as catalytic subunit, respectively. OST-A and OST-B contain common core subunits RPN1, RPN2, OST48, OST4, DAD1 and TMEM258, and OST-A contains DC2/OSTC and KRTCAP2/KCP2 specific accessory subunits. OST-A complex assembly occurs through the formation of 3 subcomplexes. Subcomplex 1 contains RPN1 and TMEM258, subcomplex 2 contains the OST-A-specific subunits STT3A, DC2/OSTC, and KCP2 as well as the core subunit OST4, and subcomplex 3 contains RPN2, DAD1, and OST48. The OST-A complex can form stable complexes with the Sec61 complex or with both the Sec61 and TRAP complexes. The cofactor is Mg(2+). Requires Mn(2+) as cofactor. Expressed at high levels in placenta, liver, muscle and pancreas, and at very low levels in brain, lung and kidney. Expressed in skin fibroblasts (at protein level).

It localises to the endoplasmic reticulum. The protein localises to the endoplasmic reticulum membrane. The catalysed reaction is a di-trans,poly-cis-dolichyl diphosphooligosaccharide + L-asparaginyl-[protein] = N(4)-(oligosaccharide-(1-&gt;4)-N-acetyl-beta-D-glucosaminyl-(1-&gt;4)-N-acetyl-beta-D-glucosaminyl)-L-asparaginyl-[protein] + a di-trans,poly-cis-dolichyl diphosphate + H(+). The protein operates within protein modification; protein glycosylation. With respect to regulation, STT3A, but not STT3B, is specifically inhibited by the N-glycosylation inhibitor NGI-235, which prevents productive binding pose of the glycan donor in the active site of STT3A. Catalytic subunit of the oligosaccharyl transferase (OST) complex that catalyzes the initial transfer of a defined glycan (Glc(3)Man(9)GlcNAc(2) in eukaryotes) from the lipid carrier dolichol-pyrophosphate to an asparagine residue within an Asn-X-Ser/Thr consensus motif in nascent polypeptide chains, the first step in protein N-glycosylation. N-glycosylation occurs cotranslationally and the complex associates with the Sec61 complex at the channel-forming translocon complex that mediates protein translocation across the endoplasmic reticulum (ER). All subunits are required for a maximal enzyme activity. This subunit contains the active site and the acceptor peptide and donor lipid-linked oligosaccharide (LLO) binding pockets. STT3A is present in the majority of OST complexes and mediates cotranslational N-glycosylation of most sites on target proteins, while STT3B-containing complexes are required for efficient post-translational glycosylation and mediate glycosylation of sites that have been skipped by STT3A. STT3A-containing OST-A complex is also required to prevent hyperglycosylation of some target proteins by preventing glycosylation of facultative sites before folding of target proteins is completed. The sequence is that of Dolichyl-diphosphooligosaccharide--protein glycosyltransferase subunit STT3A from Homo sapiens (Human).